A 450-amino-acid polypeptide reads, in one-letter code: Ribulose bisphosphate carboxylase large chain (450 aa).

Lys4 is subject to N6,N6,N6-trimethyllysine. Residues Asn113 and Thr163 each coordinate substrate. Residue Lys165 is the Proton acceptor of the active site. A substrate-binding site is contributed by Lys167. Lys191, Asp193, and Glu194 together coordinate Mg(2+). Lys191 bears the N6-carboxylysine mark. Catalysis depends on His284, which acts as the Proton acceptor. Substrate contacts are provided by Arg285, His317, and Ser369.

Belongs to the RuBisCO large chain family. Type I subfamily. As to quaternary structure, heterohexadecamer of 8 large chains and 8 small chains; disulfide-linked. The disulfide link is formed within the large subunit homodimers. It depends on Mg(2+) as a cofactor. The disulfide bond which can form in the large chain dimeric partners within the hexadecamer appears to be associated with oxidative stress and protein turnover.

It localises to the plastid. It is found in the chloroplast. It carries out the reaction 2 (2R)-3-phosphoglycerate + 2 H(+) = D-ribulose 1,5-bisphosphate + CO2 + H2O. It catalyses the reaction D-ribulose 1,5-bisphosphate + O2 = 2-phosphoglycolate + (2R)-3-phosphoglycerate + 2 H(+). Functionally, ruBisCO catalyzes two reactions: the carboxylation of D-ribulose 1,5-bisphosphate, the primary event in carbon dioxide fixation, as well as the oxidative fragmentation of the pentose substrate in the photorespiration process. Both reactions occur simultaneously and in competition at the same active site. The sequence is that of Ribulose bisphosphate carboxylase large chain from Crassula rupestris subsp. marnieriana (Pygmyweed).